The chain runs to 420 residues: Protein translocase subunit SecF (420 aa).

Helical transmembrane passes span 7-27 (FSLL…AGVL), 250-270 (LLVR…FLYV), 276-296 (WFFA…MVSF), 309-327 (IAAI…VVVF), 358-378 (VVTT…TEGG), and 388-408 (VGMV…IALI).

The protein belongs to the SecD/SecF family. SecF subfamily. In terms of assembly, forms a complex with SecD. Part of the essential Sec protein translocation apparatus which comprises SecA, SecYEG and auxiliary proteins SecDF. Other proteins may also be involved.

It is found in the cell inner membrane. In terms of biological role, part of the Sec protein translocase complex. Interacts with the SecYEG preprotein conducting channel. SecDF uses the proton motive force (PMF) to complete protein translocation after the ATP-dependent function of SecA. This Treponema pallidum (strain Nichols) protein is Protein translocase subunit SecF.